We begin with the raw amino-acid sequence, 1560 residues long: Tenascin-N (1560 aa).

The signal sequence occupies residues methionine 1–alanine 26. EGF-like domains are found at residues aspartate 167–alanine 198, tyrosine 199–serine 229, and glutamate 230–serine 260. 9 disulfides stabilise this stretch: cysteine 171–cysteine 181, cysteine 175–cysteine 186, cysteine 188–cysteine 197, cysteine 202–cysteine 212, cysteine 206–cysteine 217, cysteine 219–cysteine 228, cysteine 233–cysteine 243, cysteine 237–cysteine 248, and cysteine 250–cysteine 259. 12 consecutive Fibronectin type-III domains span residues alanine 264–valine 353, valine 354–aspartate 444, glycine 445–aspartate 532, serine 533–proline 622, lysine 623–aspartate 706, glycine 709–proline 798, lysine 799–aspartate 882, glycine 885–aspartate 970, serine 973–proline 1062, lysine 1063–proline 1144, serine 1149–proline 1238, and arginine 1239–arginine 1325. Disordered regions lie at residues glycine 868–asparagine 888 and glycine 1044–lysine 1063. Positions glycine 1044–serine 1061 are enriched in basic and acidic residues. The Fibrinogen C-terminal domain maps to aspartate 1323–glycine 1540. Asparagine 1411 carries an N-linked (GlcNAc...) asparagine glycan.

The protein belongs to the tenascin family. In terms of assembly, homohexamer. In terms of tissue distribution, highest expression in kidney followed by spleen and brain. In brain, highest expression is found in hippocampus, cerebellum and olfactory bulb. Expressed in aortic valve, corneal limbus. Expressed in ribs periosteum. During a fracture repair process, expression increases in cells of newly formed perichondrium/peristeum surrounding the cartalaginous callus.

Its subcellular location is the secreted. It is found in the extracellular space. The protein resides in the extracellular matrix. Functionally, extracellular matrix protein that seems to be a ligand for ITGA8:ITGB1, ITGAV:ITGB1 and ITGA4:ITGB1. Involved in neurite outgrowth and cell migration in hippocampal explants. During endochondral bone formation, inhibits proliferation and differentiation of proteoblasts mediated by canonical WNT signaling. In tumors, stimulates angiogenesis by elongation, migration and sprouting of endothelial cells. Expressed in most mammary tumors, may facilitate tumorigenesis by supporting the migratory behavior of breast cancer cells. This Mus musculus (Mouse) protein is Tenascin-N.